The sequence spans 859 residues: Mismatch repair endonuclease PMS2 (859 aa).

The ATP site is built by N45, D70, E109, A110, and L111. Disordered stretches follow at residues 391–413, 427–455, and 469–555; these read ELEKPVPGKQDNSPSLKSTADEK, LHPTKEIKSRGPETAELTRSFPSEKRGVL, and RGSQ…KPED. Composition is skewed to basic and acidic residues over residues 427–439 and 485–495; these read LHPTKEIKSRGPE and CMDREKIEKDS. Positions 512-525 are enriched in polar residues; that stretch reads EVASSFSSDYNVSS. The short motif at 574–577 is the Nuclear localization signal element; it reads KRFK. The disordered stretch occupies residues 578–597; the sequence is TEERPSNVNISQRLPGPQST. The segment covering 583–597 has biased composition (polar residues); it reads SNVNISQRLPGPQST.

It belongs to the DNA mismatch repair MutL/HexB family. As to quaternary structure, heterodimer of PMS2 and MLH1 (MutL alpha); this interaction is required for the stability of both partners. Forms a ternary complex with MutS alpha (MSH2-MSH6) or MutS beta (MSH2-MSH3). Part of the BRCA1-associated genome surveillance complex (BASC), which contains BRCA1, MSH2, MSH6, MLH1, ATM, BLM, PMS2 and the RAD50-MRE11-NBS1 protein complex. This association could be a dynamic process changing throughout the cell cycle and within subnuclear domains. Interacts with MTMR15/FAN1.

Its subcellular location is the nucleus. It catalyses the reaction ATP + H2O = ADP + phosphate + H(+). Functionally, component of the post-replicative DNA mismatch repair system (MMR). Heterodimerizes with MLH1 to form MutL alpha. DNA repair is initiated by MutS alpha (MSH2-MSH6) or MutS beta (MSH2-MSH3) binding to a dsDNA mismatch, then MutL alpha is recruited to the heteroduplex. Assembly of the MutL-MutS-heteroduplex ternary complex in presence of RFC and PCNA is sufficient to activate endonuclease activity of PMS2. It introduces single-strand breaks near the mismatch and thus generates new entry points for the exonuclease EXO1 to degrade the strand containing the mismatch. DNA methylation would prevent cleavage and therefore assure that only the newly mutated DNA strand is going to be corrected. MutL alpha (MLH1-PMS2) interacts physically with the clamp loader subunits of DNA polymerase III, suggesting that it may play a role to recruit the DNA polymerase III to the site of the MMR. Also implicated in DNA damage signaling, a process which induces cell cycle arrest and can lead to apoptosis in case of major DNA damages. Possesses an ATPase activity, but in the absence of gross structural changes, ATP hydrolysis may not be necessary for proficient mismatch repair. This chain is Mismatch repair endonuclease PMS2, found in Mus musculus (Mouse).